Here is a 54-residue protein sequence, read N- to C-terminus: Hemoglobin subunit omega (54 aa).

A Globin domain is found at His2 to Ile54.

It belongs to the globin family.

Functionally, hemoglobin omega chain is an embryonic-type beta-type chain found in prenatal and neonatal marsupials. This is Hemoglobin subunit omega from Notamacropus eugenii (Tammar wallaby).